Consider the following 360-residue polypeptide: S-adenosylmethionine:tRNA ribosyltransferase-isomerase (360 aa).

It belongs to the QueA family. In terms of assembly, monomer.

Its subcellular location is the cytoplasm. It carries out the reaction 7-aminomethyl-7-carbaguanosine(34) in tRNA + S-adenosyl-L-methionine = epoxyqueuosine(34) in tRNA + adenine + L-methionine + 2 H(+). It functions in the pathway tRNA modification; tRNA-queuosine biosynthesis. Functionally, transfers and isomerizes the ribose moiety from AdoMet to the 7-aminomethyl group of 7-deazaguanine (preQ1-tRNA) to give epoxyqueuosine (oQ-tRNA). The polypeptide is S-adenosylmethionine:tRNA ribosyltransferase-isomerase (Rhizobium meliloti (strain 1021) (Ensifer meliloti)).